The primary structure comprises 412 residues: Serine hydroxymethyltransferase (412 aa).

(6S)-5,6,7,8-tetrahydrofolate-binding positions include leucine 117 and 121 to 123 (GHL). Residue lysine 226 is modified to N6-(pyridoxal phosphate)lysine. 349–351 (SPF) is a binding site for (6S)-5,6,7,8-tetrahydrofolate.

It belongs to the SHMT family. In terms of assembly, homodimer. Pyridoxal 5'-phosphate serves as cofactor.

It localises to the cytoplasm. The catalysed reaction is (6R)-5,10-methylene-5,6,7,8-tetrahydrofolate + glycine + H2O = (6S)-5,6,7,8-tetrahydrofolate + L-serine. It functions in the pathway one-carbon metabolism; tetrahydrofolate interconversion. The protein operates within amino-acid biosynthesis; glycine biosynthesis; glycine from L-serine: step 1/1. In terms of biological role, catalyzes the reversible interconversion of serine and glycine with tetrahydrofolate (THF) serving as the one-carbon carrier. This reaction serves as the major source of one-carbon groups required for the biosynthesis of purines, thymidylate, methionine, and other important biomolecules. Also exhibits THF-independent aldolase activity toward beta-hydroxyamino acids, producing glycine and aldehydes, via a retro-aldol mechanism. In Oleidesulfovibrio alaskensis (strain ATCC BAA-1058 / DSM 17464 / G20) (Desulfovibrio alaskensis), this protein is Serine hydroxymethyltransferase.